A 306-amino-acid polypeptide reads, in one-letter code: tRNA N6-adenosine threonylcarbamoyltransferase (306 aa).

Fe cation contacts are provided by histidine 110 and histidine 114. Residues 132–136 (IASGK), aspartate 165, glycine 178, aspartate 182, and asparagine 268 each bind substrate. Aspartate 292 provides a ligand contact to Fe cation.

This sequence belongs to the KAE1 / TsaD family. It depends on Fe(2+) as a cofactor.

Its subcellular location is the cytoplasm. It carries out the reaction L-threonylcarbamoyladenylate + adenosine(37) in tRNA = N(6)-L-threonylcarbamoyladenosine(37) in tRNA + AMP + H(+). Required for the formation of a threonylcarbamoyl group on adenosine at position 37 (t(6)A37) in tRNAs that read codons beginning with adenine. Is involved in the transfer of the threonylcarbamoyl moiety of threonylcarbamoyl-AMP (TC-AMP) to the N6 group of A37, together with TsaE and TsaB. TsaD likely plays a direct catalytic role in this reaction. This is tRNA N6-adenosine threonylcarbamoyltransferase from Malacoplasma penetrans (strain HF-2) (Mycoplasma penetrans).